A 140-amino-acid polypeptide reads, in one-letter code: Large ribosomal subunit protein uL11 (140 aa).

This sequence belongs to the universal ribosomal protein uL11 family. Part of the ribosomal stalk of the 50S ribosomal subunit. Interacts with L10 and the large rRNA to form the base of the stalk. L10 forms an elongated spine to which L12 dimers bind in a sequential fashion forming a multimeric L10(L12)X complex. Post-translationally, one or more lysine residues are methylated.

In terms of biological role, forms part of the ribosomal stalk which helps the ribosome interact with GTP-bound translation factors. This chain is Large ribosomal subunit protein uL11, found in Nitratidesulfovibrio vulgaris (strain DSM 19637 / Miyazaki F) (Desulfovibrio vulgaris).